The following is a 515-amino-acid chain: Leucine-rich repeat transmembrane neuronal protein 2 (515 aa).

The N-terminal stretch at 1 to 33 (MGLHFKWPLGAPMLAAIYAMSVVLKMLPALGMA) is a signal peptide. Topologically, residues 34–421 (CPPKCRCEKL…EPDNAIFTQR (388 aa)) are extracellular. A glycan (N-linked (GlcNAc...) asparagine) is linked at N57. LRR repeat units lie at residues 61–83 (KGSL…QFAS), 84–107 (FSQL…AFQG), 109–131 (YKLK…TFTQ), 132–155 (LINL…LFYG), 156–179 (LRKL…LFWD), 181–203 (RSLE…GFAG), 205–227 (IKLR…HFLR), 229–251 (SSLH…MEWT), 252–275 (WSTL…VFET), and 276–299 (MPNL…ILSS). An N-linked (GlcNAc...) asparagine glycan is attached at N126. Residue N243 is glycosylated (N-linked (GlcNAc...) asparagine). A glycan (N-linked (GlcNAc...) asparagine) is linked at N362. Residues 422–442 (VITGTMALLFSFFFIIFIVFI) traverse the membrane as a helical segment. Topologically, residues 443-515 (SRKCCPPTLR…QQLPYKECEV (73 aa)) are cytoplasmic. The short motif at 512-515 (ECEV) is the Involved in DLG4-binding element.

Belongs to the LRRTM family. Interacts with DLG4. Interacts with neurexin NRXN1; interaction is mediated by heparan sulfate glycan modification on neurexin. As to expression, expressed in neuronal tissues. Widely distributed in neuropil regions in discrete puncta throughout the brain (at protein level). Detected in cortex, thalamus, striatum, olfactory bulb, cerebellum and all hippocampal subfields (at protein level). More abundant in deep than in superficial layers of neocortex (at protein level).

It localises to the cell membrane. Its subcellular location is the postsynaptic cell membrane. In terms of biological role, involved in the development and maintenance of excitatory synapses in the nervous system. Regulates surface expression of AMPA receptors and instructs the development of functional glutamate release sites. Acts as a ligand for the presynaptic receptors NRXN1-A and NRXN1-B. This is Leucine-rich repeat transmembrane neuronal protein 2 (Lrrtm2) from Rattus norvegicus (Rat).